Consider the following 279-residue polypeptide: Probable endonuclease 4 (279 aa).

The Zn(2+) site is built by histidine 69, histidine 109, glutamate 145, aspartate 179, histidine 182, histidine 216, aspartate 229, histidine 231, and glutamate 261.

Belongs to the AP endonuclease 2 family. Zn(2+) serves as cofactor.

The catalysed reaction is Endonucleolytic cleavage to 5'-phosphooligonucleotide end-products.. Its function is as follows. Endonuclease IV plays a role in DNA repair. It cleaves phosphodiester bonds at apurinic or apyrimidinic (AP) sites, generating a 3'-hydroxyl group and a 5'-terminal sugar phosphate. This Buchnera aphidicola subsp. Schizaphis graminum (strain Sg) protein is Probable endonuclease 4.